The following is a 426-amino-acid chain: Glutamyl-tRNA reductase (426 aa).

Substrate is bound by residues 49–52 (TCNR), serine 101, 106–108 (EPQ), and glutamine 112. The active-site Nucleophile is the cysteine 50. 181–186 (GAGETI) lines the NADP(+) pocket. The tract at residues 404–426 (DRLFPEKPGLPTSPHSYPDREDR) is disordered.

This sequence belongs to the glutamyl-tRNA reductase family. Homodimer.

It catalyses the reaction (S)-4-amino-5-oxopentanoate + tRNA(Glu) + NADP(+) = L-glutamyl-tRNA(Glu) + NADPH + H(+). The protein operates within porphyrin-containing compound metabolism; protoporphyrin-IX biosynthesis; 5-aminolevulinate from L-glutamyl-tRNA(Glu): step 1/2. In terms of biological role, catalyzes the NADPH-dependent reduction of glutamyl-tRNA(Glu) to glutamate 1-semialdehyde (GSA). This Xanthomonas campestris pv. phaseoli protein is Glutamyl-tRNA reductase.